The chain runs to 131 residues: Chorion class high-cysteine HCB protein 12 (131 aa).

An N-terminal signal peptide occupies residues 1 to 21; sequence MAAKLIVFVCAIALVAQSVLG. The left arm stretch occupies residues 22 to 46; the sequence is TGCGCCCRGCGCGCGGCGCGCCENF. Residues 47–110 are central domain; that stretch reads RVCSNSAAPT…GNGCVGITRS (64 aa). The interval 111-131 is right arm (Gly-rich tandem repeats); the sequence is CGGCGCGCGGCGCGCGGCGCC.

Belongs to the chorion protein family.

In terms of biological role, this protein is one of many from the eggshell of the silk moth. This chain is Chorion class high-cysteine HCB protein 12, found in Bombyx mori (Silk moth).